The following is a 125-amino-acid chain: Large ribosomal subunit protein mL51 (125 aa).

The N-terminal 29 residues, M1 to L29, are a transit peptide targeting the mitochondrion.

It belongs to the mitochondrion-specific ribosomal protein mL51 family. Component of the mitochondrial ribosome large subunit (39S) which comprises a 16S rRNA and about 50 distinct proteins.

It is found in the mitochondrion. In Xenopus tropicalis (Western clawed frog), this protein is Large ribosomal subunit protein mL51 (mrpl51).